The chain runs to 118 residues: Small ribosomal subunit protein uS13 (118 aa).

The segment at 94-118 (SLPLRGQRTKTNARTRKGPRKPIKK) is disordered.

This sequence belongs to the universal ribosomal protein uS13 family. As to quaternary structure, part of the 30S ribosomal subunit. Forms a loose heterodimer with protein S19. Forms two bridges to the 50S subunit in the 70S ribosome.

Functionally, located at the top of the head of the 30S subunit, it contacts several helices of the 16S rRNA. In the 70S ribosome it contacts the 23S rRNA (bridge B1a) and protein L5 of the 50S subunit (bridge B1b), connecting the 2 subunits; these bridges are implicated in subunit movement. Contacts the tRNAs in the A and P-sites. The protein is Small ribosomal subunit protein uS13 of Vibrio parahaemolyticus serotype O3:K6 (strain RIMD 2210633).